A 381-amino-acid chain; its full sequence is Homoserine O-succinyltransferase (381 aa).

Residues 45 to 360 form the AB hydrolase-1 domain; the sequence is NAVLVCHALN…PHGHDAFLLD (316 aa). Ser151 acts as the Nucleophile in catalysis. Arg221 lines the substrate pocket. Residues Asp321 and His354 contribute to the active site. A substrate-binding site is contributed by Asp355.

This sequence belongs to the AB hydrolase superfamily. MetX family. As to quaternary structure, homodimer.

Its subcellular location is the cytoplasm. It carries out the reaction L-homoserine + succinyl-CoA = O-succinyl-L-homoserine + CoA. It functions in the pathway amino-acid biosynthesis; L-methionine biosynthesis via de novo pathway; O-succinyl-L-homoserine from L-homoserine: step 1/1. In terms of biological role, transfers a succinyl group from succinyl-CoA to L-homoserine, forming succinyl-L-homoserine. The sequence is that of Homoserine O-succinyltransferase from Burkholderia cenocepacia (strain ATCC BAA-245 / DSM 16553 / LMG 16656 / NCTC 13227 / J2315 / CF5610) (Burkholderia cepacia (strain J2315)).